The following is a 212-amino-acid chain: Adenylate kinase (212 aa).

14-19 (GSGKGT) contributes to the ATP binding site. The segment at 34–63 (STGDLFRKKISEDSQFAAQIQNYLSSGSYV) is NMP. AMP is bound by residues threonine 35, arginine 40, 61-63 (SYV), 89-92 (GYPR), and glutamine 96. The segment at 126–163 (QRLFCQKCQKSYNLLLAKPKNGLKCDLDNTDLITRNDD) is LID. An ATP-binding site is contributed by arginine 127. The Zn(2+) site is built by cysteine 130 and cysteine 133. 136-137 (SY) is a binding site for ATP. Zn(2+) is bound by residues cysteine 150 and aspartate 153. AMP-binding residues include arginine 160 and arginine 171. Residue glutamine 199 participates in ATP binding.

Belongs to the adenylate kinase family. Monomer.

It is found in the cytoplasm. The catalysed reaction is AMP + ATP = 2 ADP. The protein operates within purine metabolism; AMP biosynthesis via salvage pathway; AMP from ADP: step 1/1. Its function is as follows. Catalyzes the reversible transfer of the terminal phosphate group between ATP and AMP. Plays an important role in cellular energy homeostasis and in adenine nucleotide metabolism. This is Adenylate kinase from Mesomycoplasma hyopneumoniae (strain 7448) (Mycoplasma hyopneumoniae).